Reading from the N-terminus, the 110-residue chain is Endoribonuclease SymE (110 aa).

In terms of domain architecture, SpoVT-AbrB spans 29–74 (SRYPDYTRIPALTMKGQWLEAAGFATGTEVDVRVMNGCIVLTAQQP).

This sequence belongs to the SymE family.

The protein localises to the cytoplasm. Its function is as follows. Involved in the degradation and recycling of damaged RNA. It is itself a target for degradation by the ATP-dependent protease Lon. In Salmonella typhi, this protein is Endoribonuclease SymE.